The chain runs to 317 residues: Small ribosomal subunit protein uS2 (317 aa).

Position 2 is an N-acetylserine (Ser-2). Laminin-binding stretches follow at residues 161–180 and 205–229; these read IPCN…MLAR and RDPE…EFQG. 5 [DE]-W-[ST] repeats span residues 230-232, 245-247, 288-290, 297-299, and 315-317; these read EWS and DWS. Positions 242-317 are laminin-binding; the sequence is EVPDWSEGVQ…DWGGSTAEWS (76 aa). The disordered stretch occupies residues 278–317; that stretch reads PGPTTEGYSEDWSAQPATEDWSAAPTAQAGDWGGSTAEWS.

This sequence belongs to the universal ribosomal protein uS2 family. In terms of assembly, monomer (37LRP) and homodimer (67LR). Component of the small ribosomal subunit. Mature ribosomes consist of a small (40S) and a large (60S) subunit. The 40S subunit contains about 33 different proteins and 1 molecule of RNA (18S). The 60S subunit contains about 49 different proteins and 3 molecules of RNA (28S, 5.8S and 5S). Interacts with rps21. Interacts with several laminins including at least lamb1. Interacts with mdk. Post-translationally, acylated. Acylation may be a prerequisite for conversion of the monomeric 37 kDa laminin receptor precursor (37LRP) to the mature dimeric 67 kDa laminin receptor (67LR), and may provide a mechanism for membrane association. In terms of processing, cleaved by stromelysin-3 (ST3) at the cell surface. Cleavage by stromelysin-3 may be a mechanism to alter cell-extracellular matrix interactions.

It localises to the cell membrane. The protein resides in the cytoplasm. Its subcellular location is the nucleus. In terms of biological role, required for the assembly and/or stability of the 40S ribosomal subunit. Required for the processing of the 20S rRNA-precursor to mature 18S rRNA in a late step of the maturation of 40S ribosomal subunits. Also functions as a cell surface receptor for laminin. Plays a role in cell adhesion to the basement membrane and in the consequent activation of signaling transduction pathways. May play a role in cell fate determination and tissue morphogenesis. The protein is Small ribosomal subunit protein uS2 (rpsa) of Ictalurus punctatus (Channel catfish).